A 145-amino-acid polypeptide reads, in one-letter code: Transcription antitermination protein NusB (145 aa).

Belongs to the NusB family.

In terms of biological role, involved in transcription antitermination. Required for transcription of ribosomal RNA (rRNA) genes. Binds specifically to the boxA antiterminator sequence of the ribosomal RNA (rrn) operons. In Acetivibrio thermocellus (strain ATCC 27405 / DSM 1237 / JCM 9322 / NBRC 103400 / NCIMB 10682 / NRRL B-4536 / VPI 7372) (Clostridium thermocellum), this protein is Transcription antitermination protein NusB.